Here is a 189-residue protein sequence, read N- to C-terminus: Interferon alpha-1 (189 aa).

The N-terminal stretch at 1-23 (MAPTSAFLTALVLLSCNAICSLG) is a signal peptide. 2 disulfide bridges follow: Cys-24–Cys-122 and Cys-52–Cys-162.

It belongs to the alpha/beta interferon family. As to quaternary structure, interacts with CR2.

It localises to the secreted. Functionally, produced by macrophages, IFN-alpha have antiviral activities. Interferon stimulates the production of two enzymes: a protein kinase and an oligoadenylate synthetase. In Sus scrofa (Pig), this protein is Interferon alpha-1.